Consider the following 319-residue polypeptide: Transmembrane and ubiquitin-like domain-containing protein 2 (319 aa).

Residues valine 36–threonine 56 form a helical membrane-spanning segment. Disordered regions lie at residues valine 88 to glutamate 128 and arginine 145 to cysteine 165. The segment covering proline 95 to glutamate 111 has biased composition (basic and acidic residues). The Ubiquitin-like domain maps to isoleucine 173–alanine 246. Helical transmembrane passes span leucine 264–tryptophan 284 and alanine 298–glycine 318.

The protein localises to the membrane. The protein is Transmembrane and ubiquitin-like domain-containing protein 2 (Tmub2) of Mus musculus (Mouse).